The sequence spans 430 residues: Histidine--tRNA ligase (430 aa).

The protein belongs to the class-II aminoacyl-tRNA synthetase family. As to quaternary structure, homodimer.

The protein localises to the cytoplasm. The enzyme catalyses tRNA(His) + L-histidine + ATP = L-histidyl-tRNA(His) + AMP + diphosphate + H(+). This is Histidine--tRNA ligase from Chlorobium limicola (strain DSM 245 / NBRC 103803 / 6330).